A 129-amino-acid chain; its full sequence is Succinate dehydrogenase cytochrome b556 subunit (129 aa).

At 1-26 (MIRNVKKQRPVNLDLQTIRFPITAIA) the chain is on the cytoplasmic side. A helical transmembrane segment spans residues 27–52 (SILHRVSGVITFVAVGILLWLLGTSL). The Periplasmic segment spans residues 53–68 (SSPEGFEQASAIMGSF). The helical transmembrane segment at 69 to 89 (FVKFIMWGILTALAYHVVVGI) threads the bilayer. Residue His-84 participates in heme binding. Topologically, residues 90–108 (RHMMMDFGYLEETFEAGKR) are cytoplasmic. Residues 109 to 129 (SAKISFVITVVLSLLAGVLVW) traverse the membrane as a helical segment.

The protein belongs to the cytochrome b560 family. In terms of assembly, part of an enzyme complex containing four subunits: a flavoprotein, an iron-sulfur protein, plus two membrane-anchoring proteins, SdhC and SdhD. The complex can form homotrimers. Requires heme as cofactor.

Its subcellular location is the cell inner membrane. It functions in the pathway carbohydrate metabolism; tricarboxylic acid cycle. Its function is as follows. Membrane-anchoring subunit of succinate dehydrogenase (SDH). The sequence is that of Succinate dehydrogenase cytochrome b556 subunit (sdhC) from Escherichia coli O157:H7.